The chain runs to 154 residues: N-acetylneuraminate anomerase NanQ (154 aa).

The protein belongs to the NanQ anomerase family. Zn(2+) serves as cofactor.

The protein localises to the cytoplasm. The enzyme catalyses N-acetyl-alpha-neuraminate = aceneuramate. It catalyses the reaction N-acetyl-beta-neuraminate = aceneuramate. With respect to regulation, inhibited by 1,10-phenanthroline. Functionally, opens both the alpha- and beta-forms of N-acetylneuraminate (sialic acid; Neu5Ac) to provide aceneuramate, the preferred substrate for NanA. Has preferential activity on the beta-anomer rather than the alpha-anomer. Accelerates a reaction that is spontaneous at slightly alkaline pH, facilitates the reaction at acidic pH. This Escherichia coli (strain K12) protein is N-acetylneuraminate anomerase NanQ.